Reading from the N-terminus, the 405-residue chain is Phosphopentomutase (405 aa).

Aspartate 10, aspartate 303, histidine 308, aspartate 344, histidine 345, and histidine 356 together coordinate Mn(2+).

Belongs to the phosphopentomutase family. Mn(2+) serves as cofactor.

The protein resides in the cytoplasm. The enzyme catalyses 2-deoxy-alpha-D-ribose 1-phosphate = 2-deoxy-D-ribose 5-phosphate. It catalyses the reaction alpha-D-ribose 1-phosphate = D-ribose 5-phosphate. The protein operates within carbohydrate degradation; 2-deoxy-D-ribose 1-phosphate degradation; D-glyceraldehyde 3-phosphate and acetaldehyde from 2-deoxy-alpha-D-ribose 1-phosphate: step 1/2. In terms of biological role, isomerase that catalyzes the conversion of deoxy-ribose 1-phosphate (dRib-1-P) and ribose 1-phosphate (Rib-1-P) to deoxy-ribose 5-phosphate (dRib-5-P) and ribose 5-phosphate (Rib-5-P), respectively. This is Phosphopentomutase from Shewanella loihica (strain ATCC BAA-1088 / PV-4).